A 54-amino-acid polypeptide reads, in one-letter code: UPF0391 membrane protein Oant_1245 (54 aa).

2 helical membrane-spanning segments follow: residues 5–25 (ALVF…GIAG) and 29–48 (GIAQ…SLIA).

This sequence belongs to the UPF0391 family.

Its subcellular location is the cell membrane. The protein is UPF0391 membrane protein Oant_1245 of Brucella anthropi (strain ATCC 49188 / DSM 6882 / CCUG 24695 / JCM 21032 / LMG 3331 / NBRC 15819 / NCTC 12168 / Alc 37) (Ochrobactrum anthropi).